A 303-amino-acid chain; its full sequence is UDP-N-acetylenolpyruvoylglucosamine reductase (303 aa).

Residues 29–196 (KIGGPADVLV…LEAVLQLEQK (168 aa)) enclose the FAD-binding PCMH-type domain. Residue R174 is part of the active site. S225 (proton donor) is an active-site residue. Residue E295 is part of the active site.

This sequence belongs to the MurB family. FAD is required as a cofactor.

The protein resides in the cytoplasm. The enzyme catalyses UDP-N-acetyl-alpha-D-muramate + NADP(+) = UDP-N-acetyl-3-O-(1-carboxyvinyl)-alpha-D-glucosamine + NADPH + H(+). It participates in cell wall biogenesis; peptidoglycan biosynthesis. Cell wall formation. The sequence is that of UDP-N-acetylenolpyruvoylglucosamine reductase from Bacillus licheniformis (strain ATCC 14580 / DSM 13 / JCM 2505 / CCUG 7422 / NBRC 12200 / NCIMB 9375 / NCTC 10341 / NRRL NRS-1264 / Gibson 46).